Here is a 1121-residue protein sequence, read N- to C-terminus: Cuscuta receptor 1 (1121 aa).

Positions 1–20 (MGNIKFLLLVFFLIVVVVNG) are cleaved as a signal peptide. Residues 21-1058 (CWEEERNALL…EESSELEDIQ (1038 aa)) lie on the Extracellular side of the membrane. An N-linked (GlcNAc...) asparagine glycan is attached at Asn91. LRR repeat units lie at residues 98 to 122 (FKSL…GFSK), 126 to 152 (LPNL…CWIS), 185 to 209 (LSNL…ALGE), 210 to 233 (LRNL…SLKI), 234 to 259 (FPSL…IIDL), 260 to 282 (SNLE…KGNK), 284 to 308 (MTSL…SLKS), and 309 to 331 (FSSL…IYAL). Asn224 carries an N-linked (GlcNAc...) asparagine glycan. Asn298, Asn321, and Asn333 each carry an N-linked (GlcNAc...) asparagine glycan. The stretch at 334-360 (LSTVEYLYFKGSSLNDNFLPNIGQMTS) is one LRR 9 repeat. N-linked (GlcNAc...) asparagine glycans are attached at residues Asn372 and Asn406. 21 LRR repeats span residues 383–406 (LKYI…CLGN), 407–432 (LTSL…IWRR), 433–457 (LTSL…QFSD), 459–479 (KKLI…EYQN), 507–531 (QYDL…LLEN), 556–580 (HLHL…MSLA), 581–605 (FPKL…ISGI), 607–628 (LTIL…LAVV), 630–654 (SPQL…EFRP), 655–678 (HVLS…VFLS), 680–701 (LITL…TRDN), 702–725 (RRLL…ICNL), 726–749 (KIIN…VSSL), 751–772 (LKHI…IFNF), 773–796 (SSLI…IGSL), 797–820 (SNLN…ICML), 822–846 (NLSI…YLTQ), 914–938 (LKYM…LGNM), 939–961 (SNIH…TFSN), 962–986 (LQEI…LLEL), and 988–1012 (SLAV…QFGT). Residues Asn531, Asn576, and Asn588 are each glycosylated (N-linked (GlcNAc...) asparagine). N-linked (GlcNAc...) asparagine glycosylation occurs at Asn689. Asn771 carries an N-linked (GlcNAc...) asparagine glycan. Residues Asn822, Asn937, Asn945, Asn976, Asn998, Asn1014, and Asn1041 are each glycosylated (N-linked (GlcNAc...) asparagine). Residues 1059-1079 (CFYIGFVVSFGAILLGLAAAL) form a helical membrane-spanning segment. Over 1080–1121 (CLNRHWRRAWFRMIEALMFYCYYFVLDNIVTPIKSRWYKNVG) the chain is Cytoplasmic.

This sequence belongs to the RLP family. In terms of assembly, interacts with an 11 kDa glycine-rich protein (GRP) of C.reflexa. Interacts with SOBIR1 and SOBIR1-like kinases; presence or absence of GRP has no effect on interaction.

The protein resides in the cell membrane. It is found in the cell surface. In terms of biological role, involved in plant defense. Contributes to resistance against parasitic plant C.reflexa. Acts as a receptor for the 11 kDa glycine-rich protein (GRP) of C.reflexa inducing immune responses such as emission of stress-related phytohormone ethylene, reactive oxygen species (ROS) release, and hypersensitive cell death. Recognizes a specific pathogen-associated molecular pattern (PAMP), a cysteine-rich peptide 21 (crip21), from GRP located on the cell wall of C.reflexa. This is Cuscuta receptor 1 from Solanum lycopersicum (Tomato).